Consider the following 186-residue polypeptide: ATP synthase subunit delta (186 aa).

It belongs to the ATPase delta chain family. As to quaternary structure, F-type ATPases have 2 components, F(1) - the catalytic core - and F(0) - the membrane proton channel. F(1) has five subunits: alpha(3), beta(3), gamma(1), delta(1), epsilon(1). F(0) has three main subunits: a(1), b(2) and c(10-14). The alpha and beta chains form an alternating ring which encloses part of the gamma chain. F(1) is attached to F(0) by a central stalk formed by the gamma and epsilon chains, while a peripheral stalk is formed by the delta and b chains.

The protein localises to the cellular chromatophore membrane. In terms of biological role, f(1)F(0) ATP synthase produces ATP from ADP in the presence of a proton or sodium gradient. F-type ATPases consist of two structural domains, F(1) containing the extramembraneous catalytic core and F(0) containing the membrane proton channel, linked together by a central stalk and a peripheral stalk. During catalysis, ATP synthesis in the catalytic domain of F(1) is coupled via a rotary mechanism of the central stalk subunits to proton translocation. Its function is as follows. This protein is part of the stalk that links CF(0) to CF(1). It either transmits conformational changes from CF(0) to CF(1) or is implicated in proton conduction. In Rhodobacter capsulatus (Rhodopseudomonas capsulata), this protein is ATP synthase subunit delta.